Consider the following 471-residue polypeptide: MKHIVKNIHFVGIGGAGMSGIAEVLLNLGYKVSGSDVGSNAATRRLASLGARVAHGHDAENVTGANAVVVSTAVTNDNPEVLAARARRIPVVPRAVMLAELMRLKQGVAIAGTHGKTTTTSLVASVLAEGGLDPTFVIGGRLNSAGANARLGTGDFIVAEADESDASFLNLFPVMEVITNIDADHMDTYGHDFARLKQAFVEFTQRLPFYGIAVLCVDDPNVREILPFVSKPVVRYGFAEDAQIRAVNARAVDGQMHFTVLRQLNGHAEPPLDIVLNLPGIHNVQNALAAIAIATELEVPDASIVKALREFHGVGRRFQRYGEVATPDGSGTFTLVDDYGHHPVEMAATLAAARGAFPDRRLVLAFQPHRFTRTRDCFEDFVKVLGTVDALLLAEVYAAGESPIVAADGRALTRALRVANKVEPVFVEQIEDMPQAILNAVRPGDVVVTMGAGSIGAVPGQLVSHQQGGQQ.

Glycine 112–threonine 118 provides a ligand contact to ATP.

It belongs to the MurCDEF family.

The protein resides in the cytoplasm. The catalysed reaction is UDP-N-acetyl-alpha-D-muramate + L-alanine + ATP = UDP-N-acetyl-alpha-D-muramoyl-L-alanine + ADP + phosphate + H(+). The protein operates within cell wall biogenesis; peptidoglycan biosynthesis. Its function is as follows. Cell wall formation. This Cupriavidus metallidurans (strain ATCC 43123 / DSM 2839 / NBRC 102507 / CH34) (Ralstonia metallidurans) protein is UDP-N-acetylmuramate--L-alanine ligase.